Reading from the N-terminus, the 298-residue chain is Cytidine deaminase (298 aa).

2 CMP/dCMP-type deaminase domains span residues 47–167 (TEQQ…FGPS) and 186–298 (DSDD…PLLG). Position 88 to 90 (88 to 90 (NLE)) interacts with substrate. Residue histidine 101 participates in Zn(2+) binding. Glutamate 103 serves as the catalytic Proton donor. Residues cysteine 128 and cysteine 131 each contribute to the Zn(2+) site.

This sequence belongs to the cytidine and deoxycytidylate deaminase family. In terms of assembly, homodimer. The cofactor is Zn(2+).

The catalysed reaction is cytidine + H2O + H(+) = uridine + NH4(+). It carries out the reaction 2'-deoxycytidine + H2O + H(+) = 2'-deoxyuridine + NH4(+). Its function is as follows. This enzyme scavenges exogenous and endogenous cytidine and 2'-deoxycytidine for UMP synthesis. This is Cytidine deaminase from Shewanella frigidimarina (strain NCIMB 400).